The sequence spans 317 residues: Transcription factor elt-3 (317 aa).

The interval 1–34 (METANYYLPSPPYSSTSSSDSRESRMNTPIPTTY) is disordered. The segment at 244–268 (CSNCKTRETTLWRRNGEGGVECNAC) adopts a GATA-type zinc-finger fold. Residues 290 to 317 (KRNRRPRNESPNSAIRNTHQRHGHAAAC) form a disordered region. The segment covering 307–317 (THQRHGHAAAC) has biased composition (basic residues).

As to quaternary structure, interacts with skn-1; interaction may enhance transcriptional activation of target genes. Expressed in head, trunk and tail. Expression decreases with age in the hypodermal cells and the pharyngeal-intestinal valve cells in the head, eventually showing little or no expression in about 14 day old worms. Expressed in hypodermal, but not in intestinal, cells at 1 day of age. Expression in the hypodermal and intestinal cells in the trunk region decreases quickly between day 3 and day 5 of adulthood. Expression in the tail between days 3 and 14 stays approximately uniform.

It localises to the nucleus. In terms of biological role, transcription factor. Required, in concert with signal transducer and transcription factor sta-2, for up-regulation of the vacuolar H(+)-ATPase and acceleration of lysosome maturation at molt. Involved in regulating hypodermal development, perhaps acting downstream of transcription factor elt-1. Modulates environmentally induced changes in collagen gene expression, including rol-6, sqt-1, lon-3, and dpy-13. Involved in regulating expression of various genes, including gst-4, sod-3, ugt-9, and col-144. In response to oxidative stress, required to up-regulate expression of gst-4 mRNA. Regulated by the Insulin/IGF-1-like signaling (IIS) mediated pathway. Plays a role in longevity. May regulate the expression of genes that control sensitivity to osmotic stress, in conjunction with the GATA region-binding transcription factor elt-2. May form a transcriptional circuit with GATA factors egl-18 and elt-6. The sequence is that of Transcription factor elt-3 from Caenorhabditis elegans.